A 255-amino-acid chain; its full sequence is tRNA (guanine-N(1)-)-methyltransferase (255 aa).

S-adenosyl-L-methionine is bound by residues Gly113 and 133 to 138; that span reads IGDYVL.

It belongs to the RNA methyltransferase TrmD family. As to quaternary structure, homodimer.

It localises to the cytoplasm. It carries out the reaction guanosine(37) in tRNA + S-adenosyl-L-methionine = N(1)-methylguanosine(37) in tRNA + S-adenosyl-L-homocysteine + H(+). Its function is as follows. Specifically methylates guanosine-37 in various tRNAs. The sequence is that of tRNA (guanine-N(1)-)-methyltransferase from Escherichia fergusonii (strain ATCC 35469 / DSM 13698 / CCUG 18766 / IAM 14443 / JCM 21226 / LMG 7866 / NBRC 102419 / NCTC 12128 / CDC 0568-73).